The primary structure comprises 231 residues: MIKDERWEGVYSFEDSPYLMETLTNLRNVSTENISFRKGLVRLGRYMGYELTKTMEFEEMHVQTPLEKTKGIFPKDRSNVVIITILRAAFPLMEGLIKNFESAKVGIVSASRGHAPDFKIEMNYIKVPQVTPEDTVIVSDPMIATGSTLIHVLKEFKDSKPKRMMIVGVLAAPEGINAVKAEFPDVEIFVTKIDDKLNNDGYIVPGLGDAGDRAFGEPFKVSMLPQMHNLE.

38-42 serves as a coordination point for GTP; sequence KGLVR. 5-phospho-alpha-D-ribose 1-diphosphate-binding positions include R87, R112, and 140–148; that span reads DPMIATGST. Uracil-binding positions include I203 and 208-210; that span reads GDA. Position 209 (D209) interacts with 5-phospho-alpha-D-ribose 1-diphosphate.

The protein belongs to the UPRTase family. Mg(2+) serves as cofactor.

The enzyme catalyses UMP + diphosphate = 5-phospho-alpha-D-ribose 1-diphosphate + uracil. The protein operates within pyrimidine metabolism; UMP biosynthesis via salvage pathway; UMP from uracil: step 1/1. With respect to regulation, allosterically activated by GTP. Functionally, catalyzes the conversion of uracil and 5-phospho-alpha-D-ribose 1-diphosphate (PRPP) to UMP and diphosphate. The chain is Uracil phosphoribosyltransferase from Methanococcus maripaludis (strain DSM 14266 / JCM 13030 / NBRC 101832 / S2 / LL).